Reading from the N-terminus, the 109-residue chain is Nucleoid-associated protein BCB4264_A0025 (109 aa).

Belongs to the YbaB/EbfC family. In terms of assembly, homodimer.

The protein resides in the cytoplasm. It localises to the nucleoid. Functionally, binds to DNA and alters its conformation. May be involved in regulation of gene expression, nucleoid organization and DNA protection. The polypeptide is Nucleoid-associated protein BCB4264_A0025 (Bacillus cereus (strain B4264)).